Reading from the N-terminus, the 1240-residue chain is Selection and upkeep of intraepithelial T-cells protein 6 (1240 aa).

An N-terminal signal peptide occupies residues 1-24 (MGTIGVPLTAHCVVLFLLQMVALS). Residues 25–1086 (TEQFTVNGLE…CNKRNPFWKK (1062 aa)) lie on the Extracellular side of the membrane. The 116-residue stretch at 26–141 (EQFTVNGLES…EEHIIEVKVT (116 aa)) folds into the Ig-like V-type domain. A disulfide bridge connects residues cysteine 49 and cysteine 123. Positions 142-231 (ATSSDIQILM…FVTHQEESIS (90 aa)) constitute an Ig-like C1-type domain. N-linked (GlcNAc...) asparagine glycosylation is found at asparagine 155, asparagine 200, and asparagine 314. Cysteine 163 and cysteine 217 are joined by a disulfide. Residues 1087-1107 (HALDLGISVFAIIVVTLIRHL) form a helical membrane-spanning segment. Residues 1108–1125 (NQREADQHFELDTLWSKD) are Cytoplasmic-facing. The helical transmembrane segment at 1126–1146 (TSVILCVLIMFNNRLKALIYF) threads the bilayer. Over 1147 to 1167 (RLYGYSPPGKTYKYIVNYILR) the chain is Extracellular. Residues 1168–1188 (FSQPLFFIVYSAIILVMHLQI) traverse the membrane as a helical segment. The Cytoplasmic segment spans residues 1189 to 1205 (QNTDSLFSLYNSWMVEM). A helical transmembrane segment spans residues 1206-1226 (IMVLGLLLAIFNVKNIATALL). Residues 1227-1240 (HLGRTTLRLFRIKD) are Extracellular-facing.

Belongs to the SKINT family. As to expression, expressed in skin.

Its subcellular location is the membrane. Its function is as follows. May act by engaging a cell surface molecule on immature T-cells in the embryonic thymus. This is Selection and upkeep of intraepithelial T-cells protein 6 (Skint6) from Mus musculus (Mouse).